An 86-amino-acid chain; its full sequence is uncharacterized protein (86 aa).

Residues 63 to 85 (VGGRSPSIQNSFFFFFFFFFFFF) form a helical membrane-spanning segment.

It is found in the membrane. This is an uncharacterized protein from Dictyostelium discoideum (Social amoeba).